The following is a 528-amino-acid chain: Sphingosine-1-phosphate lyase (528 aa).

Residues 13-35 (PAKLVLATAGITAASILAYQAIT) traverse the membrane as a helical segment. An N6-(pyridoxal phosphate)lysine modification is found at lysine 324.

The protein belongs to the group II decarboxylase family. Sphingosine-1-phosphate lyase subfamily. The cofactor is pyridoxal 5'-phosphate.

The protein localises to the endoplasmic reticulum membrane. It carries out the reaction sphinganine 1-phosphate = hexadecanal + phosphoethanolamine. It functions in the pathway lipid metabolism; sphingolipid metabolism. In terms of biological role, cleaves phosphorylated sphingoid bases (PSBs), such as sphingosine-1-phosphate, into fatty aldehydes and phosphoethanolamine. Sphingosine-1-phosphate (S1P) probably acts intracellularly as a second messenger perhaps by promoting cell proliferation; the absence of S1P lyase increases its concentration. This leads to increased lateral pseudopod formation as well as defects in the efficiency of chemotaxis. Overexpression of S1P lyase causes decreased growth rates, entry into stationary phase at lower cell density and increased sensitivity to the antitumor agents cisplatin and carboplatin; these effects are more pronounced in cells that express more enzyme. The polypeptide is Sphingosine-1-phosphate lyase (sglA) (Dictyostelium discoideum (Social amoeba)).